Here is a 204-residue protein sequence, read N- to C-terminus: Tumor necrosis factor alpha-induced protein 8-like protein 3 (204 aa).

A compositionally biased stretch (acidic residues) spans 1–10 (MDSDSGEQSE). Positions 1–20 (MDSDSGEQSEGEPGTAAGPH) are disordered. Residues 21-204 (VFSSKNLALQ…INKLLDDKIL (184 aa)) form a binding to phosphoinositides region.

Belongs to the TNFAIP8 family. Widely expressed (at protein level).

It is found in the cytoplasm. Its subcellular location is the cell membrane. Acts as a lipid transfer protein. Preferentially captures and shuttles two lipid second messengers, i.e., phosphatidylinositol 4,5- bisphosphate and phosphatidylinositol 3,4,5-trisphosphate and increases their levels in the plasma membrane. Additionally, may also function as a lipid-presenting protein to enhance the activity of the PI3K-AKT and MEK-ERK pathways. May act as a regulator of tumorigenesis through its activation of phospholipid signaling. The protein is Tumor necrosis factor alpha-induced protein 8-like protein 3 (Tnfaip8l3) of Mus musculus (Mouse).